A 229-amino-acid chain; its full sequence is Putative ABC transporter permease protein ORF1 (229 aa).

The 192-residue stretch at 23 to 214 (ALNSLLVALA…LPSLAFFALV (192 aa)) folds into the ABC transmembrane type-1 domain. A run of 5 helical transmembrane segments spans residues 27 to 47 (LLVA…MAYV), 62 to 82 (WVVV…FLVL), 91 to 111 (LTGL…WMLA), 150 to 170 (ATAL…LVLL), and 194 to 214 (SPAG…FALV).

The protein belongs to the binding-protein-dependent transport system permease family. MalFG subfamily.

The protein localises to the cell membrane. May participate in oleandomycin secretion during antibiotic production. The chain is Putative ABC transporter permease protein ORF1 from Streptomyces antibioticus.